Reading from the N-terminus, the 228-residue chain is Uridylate kinase (228 aa).

9 to 10 (GS) is an ATP binding site. Gly-44 is a binding site for UMP. ATP contacts are provided by Gly-45 and Arg-49. Residues Asp-66 and 114–120 (IVAAQTT) each bind UMP. Residues Thr-140, Tyr-146, and Asp-149 each contribute to the ATP site.

It belongs to the UMP kinase family. In terms of assembly, homohexamer.

The protein resides in the cytoplasm. The catalysed reaction is UMP + ATP = UDP + ADP. It participates in pyrimidine metabolism; CTP biosynthesis via de novo pathway; UDP from UMP (UMPK route): step 1/1. Inhibited by UTP. Catalyzes the reversible phosphorylation of UMP to UDP. The polypeptide is Uridylate kinase (Haloarcula marismortui (strain ATCC 43049 / DSM 3752 / JCM 8966 / VKM B-1809) (Halobacterium marismortui)).